Here is a 326-residue protein sequence, read N- to C-terminus: Aquaporin-3 (326 aa).

Helical transmembrane passes span 24 to 44 (LAEF…IITA) and 64 to 84 (LAFG…GISG). Positions 88-90 (NPA) match the NPA 1 motif. A helical membrane pass occupies residues 107-127 (LVYIFMQYMGAFFAASILYAV). N-linked (GlcNAc...) asparagine glycosylation occurs at N146. The next 2 membrane-spanning stretches (helical) occupy residues 166–186 (IFDA…IIDP) and 196–216 (IPLY…YNAG). Positions 220-222 (NPA) match the NPA 2 motif. Residues 247 to 267 (LWWLVPVIGPHVGGLLGGVTY) form a helical membrane-spanning segment. An N-linked (GlcNAc...) asparagine glycan is attached at N294.

This sequence belongs to the MIP/aquaporin (TC 1.A.8) family.

It localises to the cell membrane. Functionally, aquaglyceroporin that may modulate the water content and osmolytes during anhydrobiosis. The protein is Aquaporin-3 of Milnesium tardigradum (Water bear).